Consider the following 301-residue polypeptide: Ribonuclease H2 subunit A (301 aa).

An N-acetylmethionine modification is found at Met-1. One can recognise an RNase H type-2 domain in the interval 28 to 251; sequence PCVLGVDEAG…AQAILEKEAE (224 aa). Positions 34, 35, and 142 each coordinate a divalent metal cation. Position 217 is a phosphothreonine (Thr-217). Residues 255–264 are compositionally biased toward acidic residues; it reads WEDSEAEEDP. The interval 255-284 is disordered; the sequence is WEDSEAEEDPERPGKITSYFSQGPQTCRPQ. Ser-258 is subject to Phosphoserine. Positions 272-282 are enriched in polar residues; it reads SYFSQGPQTCR.

It belongs to the RNase HII family. Eukaryotic subfamily. The RNase H2 complex is a heterotrimer composed of the catalytic subunit RNASEH2A and the non-catalytic subunits RNASEH2B and RNASEH2C. Requires Mn(2+) as cofactor. Mg(2+) is required as a cofactor.

It is found in the nucleus. It carries out the reaction Endonucleolytic cleavage to 5'-phosphomonoester.. Functionally, catalytic subunit of RNase HII, an endonuclease that specifically degrades the RNA of RNA:DNA hybrids. Participates in DNA replication, possibly by mediating the removal of lagging-strand Okazaki fragment RNA primers during DNA replication. Mediates the excision of single ribonucleotides from DNA:RNA duplexes. This Mus musculus (Mouse) protein is Ribonuclease H2 subunit A (Rnaseh2a).